A 262-amino-acid polypeptide reads, in one-letter code: 27 kDa lipoprotein antigen (262 aa).

The signal sequence occupies residues 1-28 (MSASCAVPRLTRFAVFAVAGATALSLSA). Low complexity-rich tracts occupy residues 28-57 (ACGSSNKSSSTSTSTSTSTSTVTSAAPSST) and 148-158 (STPGGASSTPP). Disordered stretches follow at residues 28–60 (ACGSSNKSSSTSTSTSTSTSTVTSAAPSSTPNA) and 138–171 (VNGTCPKPHESTPGGASSTPPSGSPSPAPAKPAW). C29 carries N-palmitoyl cysteine lipidation. C29 is lipidated: S-diacylglycerol cysteine.

The protein localises to the cell membrane. This Mycobacterium intracellulare protein is 27 kDa lipoprotein antigen (Mi43).